Reading from the N-terminus, the 263-residue chain is Chymotrypsinogen B (263 aa).

Residues 1–18 (MAFLWLVSCFALVGATFG) form the signal peptide. 5 cysteine pairs are disulfide-bonded: Cys19-Cys140, Cys60-Cys76, Cys154-Cys219, Cys186-Cys200, and Cys209-Cys238. A Peptidase S1 domain is found at 34 to 261 (IVNGEDAIPG…LMPWVQEILE (228 aa)). His75 (charge relay system) is an active-site residue. Phosphoserine is present on Ser93. Asp120 functions as the Charge relay system in the catalytic mechanism. Ser213 acts as the Charge relay system in catalysis.

This sequence belongs to the peptidase S1 family.

The protein resides in the secreted. It localises to the extracellular space. The enzyme catalyses Preferential cleavage: Tyr-|-Xaa, Trp-|-Xaa, Phe-|-Xaa, Leu-|-Xaa.. The polypeptide is Chymotrypsinogen B (Ctrb1) (Mus musculus (Mouse)).